The following is a 326-amino-acid chain: Undecaprenyl-phosphate 4-deoxy-4-formamido-L-arabinose transferase (326 aa).

A run of 2 helical transmembrane segments spans residues 235–255 (LLSVVGSVVALSGFLLAVLLI) and 270–290 (VFTLFAVLFTFIGAQFVGMGL).

Belongs to the glycosyltransferase 2 family.

The protein localises to the cell inner membrane. It carries out the reaction UDP-4-deoxy-4-formamido-beta-L-arabinose + di-trans,octa-cis-undecaprenyl phosphate = 4-deoxy-4-formamido-alpha-L-arabinopyranosyl di-trans,octa-cis-undecaprenyl phosphate + UDP. It functions in the pathway glycolipid biosynthesis; 4-amino-4-deoxy-alpha-L-arabinose undecaprenyl phosphate biosynthesis; 4-amino-4-deoxy-alpha-L-arabinose undecaprenyl phosphate from UDP-4-deoxy-4-formamido-beta-L-arabinose and undecaprenyl phosphate: step 1/2. Its pathway is bacterial outer membrane biogenesis; lipopolysaccharide biosynthesis. Its function is as follows. Catalyzes the transfer of 4-deoxy-4-formamido-L-arabinose from UDP to undecaprenyl phosphate. The modified arabinose is attached to lipid A and is required for resistance to polymyxin and cationic antimicrobial peptides. The protein is Undecaprenyl-phosphate 4-deoxy-4-formamido-L-arabinose transferase of Serratia proteamaculans (strain 568).